An 80-amino-acid polypeptide reads, in one-letter code: MYSGVVSRTNIEIDDELVAAAQRMYRLDSKRSAVDLALRRLVGEPLGRDEALALQGSGFDFSNDEIESFSDTDRKLADES.

The tract at residues 60-80 (DFSNDEIESFSDTDRKLADES) is disordered. Position 67 (E67) interacts with Mg(2+). Position 67 (E67) interacts with Mn(2+). The segment covering 71–80 (DTDRKLADES) has biased composition (basic and acidic residues).

As to quaternary structure, forms a VapB15-VapC15(2) heterotrimer and a VapB15(2)-VapC15(2) heterotetramer; each toxin pair forms a homodimer which creates a channel in which the antitoxin binds. Requires Mg(2+) as cofactor. Mn(2+) is required as a cofactor.

Functionally, antitoxin component of a type II toxin-antitoxin (TA) system. Neutralizes the toxic effect of cognate toxin VapC15. This Mycobacterium tuberculosis (strain CDC 1551 / Oshkosh) protein is Antitoxin VapB15 (vapB15).